The primary structure comprises 476 residues: Serine/threonine-protein kinase Chk1 (476 aa).

The segment at 1 to 265 (MAVPFVEDWD…IPDIKKDRWY (265 aa)) is interaction with CLSPN. The Protein kinase domain occupies 9-265 (WDLVQTLGEG…IPDIKKDRWY (257 aa)). Residues 15-23 (LGEGAYGEV) and Lys-38 contribute to the ATP site. The active-site Proton acceptor is the Asp-130. Lys-132 participates in a covalent cross-link: Glycyl lysine isopeptide (Lys-Gly) (interchain with G-Cter in ubiquitin). The tract at residues 267–331 (KPLNRGAKRP…RTGLSLWDTG (65 aa)) is disordered. Phosphoserine; by PKB/AKT1 is present on Ser-280. Low complexity predominate over residues 280-291 (SGGMSESSSGFS). A phosphoserine mark is found at Ser-286, Ser-296, and Ser-301. A compositionally biased stretch (polar residues) spans 298–320 (LDFSPVNNGSSEETVKFSSSQPE). Phosphoserine; by ATM and ATR is present on Ser-317. Ser-345 carries the phosphoserine; by ATR modification. Residues 391 to 476 (QCLKETFEKL…SSQKVWFPVT (86 aa)) are autoinhibitory region. Lys-436 is covalently cross-linked (Glycyl lysine isopeptide (Lys-Gly) (interchain with G-Cter in ubiquitin)). Residues Ser-463, Ser-467, and Ser-468 each carry the phosphoserine modification.

This sequence belongs to the protein kinase superfamily. CAMK Ser/Thr protein kinase family. NIM1 subfamily. Interacts (phosphorylated by ATR) with RAD51. Interacts with and phosphorylates CLSPN, an adapter protein that regulates the ATR-dependent phosphorylation of CHEK1. Interacts with BRCA1. Interacts with and phosphorylates CDC25A, CDC25B and CDC25C. Interacts with FBXO6, which regulates CHEK1. Interacts with PPM1D, which regulates CHEK1 through dephosphorylation. Interacts with TIMELESS; DNA damage-dependent. Interacts with FEM1B; activates CHEK1 in response to stress. Interacts with TLK1. Interacts with XPO1 and YWHAZ. Interacts with CDK5RAP3; antagonizes CHEK1. In terms of processing, phosphorylated by ATR in a RAD17-dependent manner in response to ultraviolet irradiation and inhibition of DNA replication. Phosphorylated by ATM in response to ionizing irradiation. ATM and ATR can both phosphorylate Ser-317 and Ser-345 and this results in enhanced kinase activity. Phosphorylation at Ser-345 induces a change in the conformation of the protein, activates the kinase activity and is a prerequisite for interaction with FBXO6 and subsequent ubiquitination at Lys-436. Phosphorylation at Ser-345 also increases binding to 14-3-3 proteins and promotes nuclear retention. Conversely, dephosphorylation at Ser-345 by PPM1D may contribute to exit from checkpoint mediated cell cycle arrest. Phosphorylation at Ser-280 by AKT1/PKB, may promote mono and/or diubiquitination. Also phosphorylated at undefined residues during mitotic arrest, resulting in decreased activity. Ubiquitinated. Mono or diubiquitination promotes nuclear exclusion. The activated form (phosphorylated on Ser-345) is polyubiquitinated at Lys-436 by some SCF-type E3 ubiquitin ligase complex containing FBXO6 promoting its degradation. Ubiquitination and degradation are required to terminate the checkpoint and ensure that activated CHEK1 does not accumulate as cells progress through S phase, when replication forks encounter transient impediments during normal DNA replication. 'Lys-63'-mediated ubiquitination by TRAF4 at Lys-132 activates cell cycle arrest and activation of DNA repair. Post-translationally, proteolytically cleaved at the C-terminus by SPRTN during normal DNA replication, thereby promoting CHEK1 removal from chromatin and activating the protein kinase activity. In terms of tissue distribution, found in all adult tissues tested. Elevated expression in testis, lung and spleen. 15.5 day old embryos show ubiquitous expression with strong expression in brain, liver, kidney, pancreas, intestine, thymus and lung.

It localises to the nucleus. The protein resides in the chromosome. It is found in the cytoplasm. Its subcellular location is the cytoskeleton. The protein localises to the microtubule organizing center. It localises to the centrosome. It catalyses the reaction L-seryl-[protein] + ATP = O-phospho-L-seryl-[protein] + ADP + H(+). It carries out the reaction L-threonyl-[protein] + ATP = O-phospho-L-threonyl-[protein] + ADP + H(+). Activated through phosphorylation predominantly by ATR but also by ATM in response to DNA damage or inhibition of DNA replication. Activation is modulated by several mediators including CLSPN, BRCA1 and FEM1B. Proteolytic cleavage at the C-terminus by SPRTN during normal DNA replication activates the protein kinase activity. Its function is as follows. Serine/threonine-protein kinase which is required for checkpoint-mediated cell cycle arrest and activation of DNA repair in response to the presence of DNA damage or unreplicated DNA. May also negatively regulate cell cycle progression during unperturbed cell cycles. This regulation is achieved by a number of mechanisms that together help to preserve the integrity of the genome. Recognizes the substrate consensus sequence [R-X-X-S/T]. Binds to and phosphorylates CDC25A, CDC25B and CDC25C. Phosphorylation of CDC25A at 'Ser-178' and 'Thr-507' and phosphorylation of CDC25C at 'Ser-216' creates binding sites for 14-3-3 proteins which inhibit CDC25A and CDC25C. Phosphorylation of CDC25A at 'Ser-76', 'Ser-124', 'Ser-178', 'Ser-279' and 'Ser-293' promotes proteolysis of CDC25A. Phosphorylation of CDC25A at 'Ser-76' primes the protein for subsequent phosphorylation at 'Ser-79', 'Ser-82' and 'Ser-88' by NEK11, which is required for polyubiquitination and degradation of CDCD25A. Inhibition of CDC25 leads to increased inhibitory tyrosine phosphorylation of CDK-cyclin complexes and blocks cell cycle progression. Also phosphorylates NEK6. Binds to and phosphorylates RAD51 at 'Thr-309', which promotes the release of RAD51 from BRCA2 and enhances the association of RAD51 with chromatin, thereby promoting DNA repair by homologous recombination. Phosphorylates multiple sites within the C-terminus of TP53, which promotes activation of TP53 by acetylation and promotes cell cycle arrest and suppression of cellular proliferation. Also promotes repair of DNA cross-links through phosphorylation of FANCE. Binds to and phosphorylates TLK1 at 'Ser-743', which prevents the TLK1-dependent phosphorylation of the chromatin assembly factor ASF1A. This may enhance chromatin assembly both in the presence or absence of DNA damage. May also play a role in replication fork maintenance through regulation of PCNA. May regulate the transcription of genes that regulate cell-cycle progression through the phosphorylation of histones. Phosphorylates histone H3.1 (to form H3T11ph), which leads to epigenetic inhibition of a subset of genes. May also phosphorylate RB1 to promote its interaction with the E2F family of transcription factors and subsequent cell cycle arrest. Phosphorylates SPRTN, promoting SPRTN recruitment to chromatin. Reduces replication stress and activates the G2/M checkpoint, by phosphorylating and inactivating PABIR1/FAM122A and promoting the serine/threonine-protein phosphatase 2A-mediated dephosphorylation and stabilization of WEE1 levels and activity. This Mus musculus (Mouse) protein is Serine/threonine-protein kinase Chk1 (Chek1).